The primary structure comprises 327 residues: Lipoyl synthase (327 aa).

Residues cysteine 66, cysteine 71, cysteine 77, cysteine 92, cysteine 96, cysteine 99, and serine 306 each contribute to the [4Fe-4S] cluster site. Residues 78–295 (FSKGTATFMI…EKEAYELGFT (218 aa)) form the Radical SAM core domain.

This sequence belongs to the radical SAM superfamily. Lipoyl synthase family. Requires [4Fe-4S] cluster as cofactor.

The protein resides in the cytoplasm. The enzyme catalyses [[Fe-S] cluster scaffold protein carrying a second [4Fe-4S](2+) cluster] + N(6)-octanoyl-L-lysyl-[protein] + 2 oxidized [2Fe-2S]-[ferredoxin] + 2 S-adenosyl-L-methionine + 4 H(+) = [[Fe-S] cluster scaffold protein] + N(6)-[(R)-dihydrolipoyl]-L-lysyl-[protein] + 4 Fe(3+) + 2 hydrogen sulfide + 2 5'-deoxyadenosine + 2 L-methionine + 2 reduced [2Fe-2S]-[ferredoxin]. It functions in the pathway protein modification; protein lipoylation via endogenous pathway; protein N(6)-(lipoyl)lysine from octanoyl-[acyl-carrier-protein]: step 2/2. Its function is as follows. Catalyzes the radical-mediated insertion of two sulfur atoms into the C-6 and C-8 positions of the octanoyl moiety bound to the lipoyl domains of lipoate-dependent enzymes, thereby converting the octanoylated domains into lipoylated derivatives. The sequence is that of Lipoyl synthase from Neisseria gonorrhoeae (strain ATCC 700825 / FA 1090).